Reading from the N-terminus, the 281-residue chain is Pantothenate synthetase (281 aa).

30–37 (MGNLHLGH) contributes to the ATP binding site. The active-site Proton donor is His37. Residue Gln61 coordinates (R)-pantoate. Gln61 is a binding site for beta-alanine. 149-152 (GRKD) provides a ligand contact to ATP. Residue Gln155 coordinates (R)-pantoate. Residues Ile178 and 186–189 (MSSR) each bind ATP.

Belongs to the pantothenate synthetase family. Homodimer.

The protein resides in the cytoplasm. The catalysed reaction is (R)-pantoate + beta-alanine + ATP = (R)-pantothenate + AMP + diphosphate + H(+). It functions in the pathway cofactor biosynthesis; (R)-pantothenate biosynthesis; (R)-pantothenate from (R)-pantoate and beta-alanine: step 1/1. Its function is as follows. Catalyzes the condensation of pantoate with beta-alanine in an ATP-dependent reaction via a pantoyl-adenylate intermediate. The sequence is that of Pantothenate synthetase from Shewanella woodyi (strain ATCC 51908 / MS32).